We begin with the raw amino-acid sequence, 129 residues long: Small ribosomal subunit protein uS11 (129 aa).

It belongs to the universal ribosomal protein uS11 family. In terms of assembly, part of the 30S ribosomal subunit. Interacts with proteins S7 and S18. Binds to IF-3.

Functionally, located on the platform of the 30S subunit, it bridges several disparate RNA helices of the 16S rRNA. Forms part of the Shine-Dalgarno cleft in the 70S ribosome. The protein is Small ribosomal subunit protein uS11 of Methylobacterium nodulans (strain LMG 21967 / CNCM I-2342 / ORS 2060).